The following is a 131-amino-acid chain: Large ribosomal subunit protein bL12 (131 aa).

It belongs to the bacterial ribosomal protein bL12 family. In terms of assembly, homodimer. Part of the ribosomal stalk of the 50S ribosomal subunit. Forms a multimeric L10(L12)X complex, where L10 forms an elongated spine to which 2 to 4 L12 dimers bind in a sequential fashion. Binds GTP-bound translation factors.

Forms part of the ribosomal stalk which helps the ribosome interact with GTP-bound translation factors. Is thus essential for accurate translation. This is Large ribosomal subunit protein bL12 from Prochlorococcus marinus (strain MIT 9215).